The primary structure comprises 274 residues: tRNA-cytidine(32) 2-sulfurtransferase (274 aa).

A PP-loop motif motif is present at residues 40 to 45; the sequence is SGGKDS. The [4Fe-4S] cluster site is built by Cys115, Cys118, and Cys206.

Belongs to the TtcA family. As to quaternary structure, homodimer. Mg(2+) is required as a cofactor. It depends on [4Fe-4S] cluster as a cofactor.

The protein resides in the cytoplasm. It catalyses the reaction cytidine(32) in tRNA + S-sulfanyl-L-cysteinyl-[cysteine desulfurase] + AH2 + ATP = 2-thiocytidine(32) in tRNA + L-cysteinyl-[cysteine desulfurase] + A + AMP + diphosphate + H(+). The protein operates within tRNA modification. In terms of biological role, catalyzes the ATP-dependent 2-thiolation of cytidine in position 32 of tRNA, to form 2-thiocytidine (s(2)C32). The sulfur atoms are provided by the cysteine/cysteine desulfurase (IscS) system. The protein is tRNA-cytidine(32) 2-sulfurtransferase of Pseudomonas syringae pv. syringae (strain B728a).